A 127-amino-acid chain; its full sequence is Small ribosomal subunit protein eS8 (127 aa).

This sequence belongs to the eukaryotic ribosomal protein eS8 family. Part of the 30S ribosomal subunit.

In Pyrococcus furiosus (strain ATCC 43587 / DSM 3638 / JCM 8422 / Vc1), this protein is Small ribosomal subunit protein eS8.